Reading from the N-terminus, the 291-residue chain is Porphobilinogen deaminase (291 aa).

At C233 the chain carries S-(dipyrrolylmethanemethyl)cysteine.

Belongs to the HMBS family. As to quaternary structure, monomer. The cofactor is dipyrromethane.

It catalyses the reaction 4 porphobilinogen + H2O = hydroxymethylbilane + 4 NH4(+). It participates in porphyrin-containing compound metabolism; protoporphyrin-IX biosynthesis; coproporphyrinogen-III from 5-aminolevulinate: step 2/4. In terms of biological role, tetrapolymerization of the monopyrrole PBG into the hydroxymethylbilane pre-uroporphyrinogen in several discrete steps. The sequence is that of Porphobilinogen deaminase (hemC) from Ruminiclostridium josui (Clostridium josui).